We begin with the raw amino-acid sequence, 721 residues long: Polyribonucleotide nucleotidyltransferase (721 aa).

The Mg(2+) site is built by aspartate 495 and aspartate 501. One can recognise a KH domain in the interval 562–621 (PRITTIKIRPERIKDIIGPGGKTIKDITARTGTSINIEDDGSVSIASPNQDKVEEAIKMI). The S1 motif domain occupies 631–699 (GRIYLGTVRK…RSGKIRLSRK (69 aa)). The interval 699–721 (KEALADSAKKSEGTEPPKGEPAK) is disordered.

It belongs to the polyribonucleotide nucleotidyltransferase family. Mg(2+) is required as a cofactor.

It is found in the cytoplasm. It catalyses the reaction RNA(n+1) + phosphate = RNA(n) + a ribonucleoside 5'-diphosphate. Involved in mRNA degradation. Catalyzes the phosphorolysis of single-stranded polyribonucleotides processively in the 3'- to 5'-direction. This is Polyribonucleotide nucleotidyltransferase from Anaeromyxobacter sp. (strain K).